Here is a 394-residue protein sequence, read N- to C-terminus: Enoyl-CoA delta isomerase 2 (394 aa).

The N-terminal 38 residues, 1-38 (MAMAYLAWRLARRSCPSSLQVTSFPVVQLHMNRTAMRA), are a transit peptide targeting the mitochondrion. The 86-residue stretch at 39–124 (SQKDFENSMN…VSSLSPSLES (86 aa)) folds into the ACB domain. K51 bears the N6-acetyllysine; alternate mark. Residue K51 is modified to N6-succinyllysine; alternate. Residue K55 is modified to N6-succinyllysine. Residue K62 is modified to N6-acetyllysine; alternate. K62 carries the post-translational modification N6-succinyllysine; alternate. 66-70 (YALYK) serves as a coordination point for an acyl-CoA. N6-succinyllysine is present on residues K70, K81, and K90. N6-acetyllysine; alternate is present on K92. K92 is subject to N6-succinyllysine; alternate. K92 lines the an acyl-CoA pocket. S101 carries the phosphoserine modification. Y111 contacts an acyl-CoA. S119 bears the Phosphoserine mark. The interval 151-322 (TKIMFNRPKK…AQGLVTEVFP (172 aa)) is ECH-like. K161 is modified (N6-succinyllysine). 198 to 202 (SGNDL) serves as a coordination point for substrate. K289 bears the N6-succinyllysine mark. A Microbody targeting signal motif is present at residues 392 to 394 (SKL).

It in the C-terminal section; belongs to the enoyl-CoA hydratase/isomerase family. As to expression, abundant in heart, skeletal muscle and liver. Expressed in CD34(+) T-cells and CD34(+) bone marrow cells.

The protein resides in the mitochondrion. The protein localises to the peroxisome matrix. It catalyses the reaction a (3Z)-enoyl-CoA = a 4-saturated (2E)-enoyl-CoA. The enzyme catalyses (3Z)-octenoyl-CoA = (2E)-octenoyl-CoA. The catalysed reaction is a (3E)-enoyl-CoA = a 4-saturated (2E)-enoyl-CoA. It carries out the reaction (2E)-tetradecenoyl-CoA = (3Z)-tetradecenoyl-CoA. It catalyses the reaction (3E)-tetradecenoyl-CoA = (2E)-tetradecenoyl-CoA. The enzyme catalyses (3E)-octenoyl-CoA = (2E)-octenoyl-CoA. The catalysed reaction is (3E)-nonenoyl-CoA = (2E)-nonenoyl-CoA. It functions in the pathway lipid metabolism; fatty acid beta-oxidation. Able to isomerize both 3-cis and 3-trans double bonds into the 2-trans form in a range of enoyl-CoA species. Has a preference for 3-trans substrates. This chain is Enoyl-CoA delta isomerase 2 (ECI2), found in Homo sapiens (Human).